The sequence spans 45 residues: Enterotoxin (45 aa).

As to quaternary structure, one of 3 components (of 35, 45 and 105 kDa) of the enterotoxin.

One of 3 components required for cytotoxicity (tested in African green monkey Vero cells); the complex is not hemolytic. This is Enterotoxin from Bacillus cereus.